Here is a 463-residue protein sequence, read N- to C-terminus: Glycine--tRNA ligase (463 aa).

Arg-98 and Glu-174 together coordinate substrate. Residues 206–208 (RNE), 216–221 (FRTREF), 290–291 (EL), and 334–337 (GADR) contribute to the ATP site. Substrate is bound at residue 221–225 (FEQME). 330–334 (EPSLG) contributes to the substrate binding site.

This sequence belongs to the class-II aminoacyl-tRNA synthetase family. In terms of assembly, homodimer.

The protein resides in the cytoplasm. The enzyme catalyses tRNA(Gly) + glycine + ATP = glycyl-tRNA(Gly) + AMP + diphosphate. In terms of biological role, catalyzes the attachment of glycine to tRNA(Gly). In Staphylococcus aureus (strain Mu50 / ATCC 700699), this protein is Glycine--tRNA ligase.